We begin with the raw amino-acid sequence, 262 residues long: Thiazole synthase (262 aa).

The Schiff-base intermediate with DXP role is filled by Lys96. Residues Gly157, 184–185 (AG), and 206–207 (NT) each bind 1-deoxy-D-xylulose 5-phosphate.

It belongs to the ThiG family. As to quaternary structure, homotetramer. Forms heterodimers with either ThiH or ThiS.

The protein localises to the cytoplasm. It carries out the reaction [ThiS sulfur-carrier protein]-C-terminal-Gly-aminoethanethioate + 2-iminoacetate + 1-deoxy-D-xylulose 5-phosphate = [ThiS sulfur-carrier protein]-C-terminal Gly-Gly + 2-[(2R,5Z)-2-carboxy-4-methylthiazol-5(2H)-ylidene]ethyl phosphate + 2 H2O + H(+). The protein operates within cofactor biosynthesis; thiamine diphosphate biosynthesis. In terms of biological role, catalyzes the rearrangement of 1-deoxy-D-xylulose 5-phosphate (DXP) to produce the thiazole phosphate moiety of thiamine. Sulfur is provided by the thiocarboxylate moiety of the carrier protein ThiS. In vitro, sulfur can be provided by H(2)S. The protein is Thiazole synthase of Legionella pneumophila (strain Lens).